Here is a 397-residue protein sequence, read N- to C-terminus: MRILVLNSGSSSIKFQLFEMQTKTSLASGLVEQIGSSSSRAVLKANGEIYEIKRFIKDHHDGLEAMNELFTTSHTLHDLSELDGIGHRIVHGGESFFSSMIVDESVIKKIEEISPLAPLHNPGHLAGIKNAMKESKNVPHVVVFDTVFHQSMPEYAYRYALPYDVCKTHHIRKYGFHGTSHRYVCKQAAKMLGIEFDKFNAISLHLGNGASACAVQNGKSIDTSMGLSPLEGLIMGTRSGDMDPAVVIYLLNIGVLKWNEIDNFLNKKSGLFGICGSSDMREVVAKMQNDERAKLAFEMFCYRVKKYIGSYYAILGRVDALIFTGGIGENAPNTRQKICDDLKHLGIHINHELNFSNERGERCIDEDGAKIKTLIIPTNEELEIAIETARVIKERTL.

N7 serves as a coordination point for Mg(2+). ATP is bound at residue K14. R88 contacts substrate. D145 functions as the Proton donor/acceptor in the catalytic mechanism. Residues 205–209 (HLGNG), 279–281 (DMR), and 326–330 (GIGEN) each bind ATP. Position 380 (E380) interacts with Mg(2+).

The protein belongs to the acetokinase family. As to quaternary structure, homodimer. The cofactor is Mg(2+). Mn(2+) is required as a cofactor.

The protein resides in the cytoplasm. The catalysed reaction is acetate + ATP = acetyl phosphate + ADP. The protein operates within metabolic intermediate biosynthesis; acetyl-CoA biosynthesis; acetyl-CoA from acetate: step 1/2. Its function is as follows. Catalyzes the formation of acetyl phosphate from acetate and ATP. Can also catalyze the reverse reaction. This Campylobacter concisus (strain 13826) protein is Acetate kinase.